A 490-amino-acid chain; its full sequence is Cytochrome P450 71D11 (490 aa).

Position 427 (Cys-427) interacts with heme.

This sequence belongs to the cytochrome P450 family. It depends on heme as a cofactor.

In Lotus japonicus (Lotus corniculatus var. japonicus), this protein is Cytochrome P450 71D11 (CYP71D11).